A 133-amino-acid chain; its full sequence is Putative N-acetylgalactosamine permease IIC component 2 (133 aa).

Residues 1 to 2 (ME) lie on the Cytoplasmic side of the membrane. Residues 1–133 (MEISLLQAFA…CDLATNPRRI (133 aa)) enclose the PTS EIIC type-4 domain. Residues 3-23 (ISLLQAFALGIIAFIAGLDMF) form a helical membrane-spanning segment. The Periplasmic segment spans residues 24-32 (NGLTHMHRP). A helical membrane pass occupies residues 33-53 (VVLGPLVGLVLGDLHTGILTG). At 54–65 (GTLELVWMGLAP) the chain is on the cytoplasmic side. A helical membrane pass occupies residues 66 to 86 (LAGAQPPNVIIGTIVGTAFAI). At 87-93 (TTGVKPD) the chain is on the periplasmic side. Residues 94 to 114 (VAVGVAVPFAVAVQMGITFLF) form a helical membrane-spanning segment. Residues 115–133 (SVMSGVMSRCDLATNPRRI) are Cytoplasmic-facing.

It is found in the cell inner membrane. Its function is as follows. The phosphoenolpyruvate-dependent sugar phosphotransferase system (PTS), a major carbohydrate active -transport system, catalyzes the phosphorylation of incoming sugar substrates concomitant with their translocation across the cell membrane. This system is involved in N-acetylgalactosamine transport. The chain is Putative N-acetylgalactosamine permease IIC component 2 (agaW) from Escherichia coli (strain K12).